We begin with the raw amino-acid sequence, 131 residues long: MAMTDPLGDMLTRIRNGQQAKKDSVLSPASKLRANVLEVLQREGYIRGYSEDASGKHAALRIELKYFEGEPAIKHVARVSKPGRRIYSGSKELPTVRNGLGITIVSTPKGVLSDNEARTQNVGGEVLAEVF.

It belongs to the universal ribosomal protein uS8 family. Part of the 30S ribosomal subunit. Contacts proteins S5 and S12.

Its function is as follows. One of the primary rRNA binding proteins, it binds directly to 16S rRNA central domain where it helps coordinate assembly of the platform of the 30S subunit. In Erythrobacter litoralis (strain HTCC2594), this protein is Small ribosomal subunit protein uS8.